The sequence spans 421 residues: MDKYTELVINKIPELGFVNLLSHIYQTVGLCSSIDISKFKTNCNGYVVERFDKSETAGKVSCVPISILMELVERGMLSKPDNSKSQLEVKTDLVNELISKNNGFEDIMTIPTSIPMKYFFKPVLKEKVSKAIDFSVMDIKGDDVSRMGIRYGENDKVVKIKIAPERDAWMTNTSIHQFLIPMCYGTEVIYIGQFNFNFMNRHAIYEKSSVFNKNTEVFKLKDRIRDNRSSRFIMFGFCYLHHWKCAIYDKNRDFICFYDSGGNNPNEFNHYRNFFFYSNSDGLNRNSYLSSLANENADIDILFNFFIDNYGVTAGCINVEVNQLLESECGMFTCLFMAVCCLNPPKGFKGIRKIYTYFKFLADKKVTMLKSILFNVGKMEFTIKEVDGEGMQQYKKMEKWCANTINILANKITSRVEDIIN.

Residues histidine 242, aspartate 249, and cysteine 329 contribute to the active site.

It belongs to the peptidase C57 family.

The protein localises to the virion. Late protein responsible for processing most or all of the viral core and membrane proteins known to undergo morphogenesis-associated proteolysis. These proteolytic events are involved in the transformation of immature virions (IV) into mature virions (MV). This chain is Core protease I7 homolog, found in Fowlpox virus (strain NVSL) (FPV).